Here is a 704-residue protein sequence, read N- to C-terminus: Elongation factor G (704 aa).

The tr-type G domain occupies 8–291; sequence DKVRNIGIMA…AVVDYLASPL (284 aa). GTP is bound by residues 17-24, 90-94, and 144-147; these read AHIDAGKT, DTPGH, and NKMD.

This sequence belongs to the TRAFAC class translation factor GTPase superfamily. Classic translation factor GTPase family. EF-G/EF-2 subfamily.

It localises to the cytoplasm. Its function is as follows. Catalyzes the GTP-dependent ribosomal translocation step during translation elongation. During this step, the ribosome changes from the pre-translocational (PRE) to the post-translocational (POST) state as the newly formed A-site-bound peptidyl-tRNA and P-site-bound deacylated tRNA move to the P and E sites, respectively. Catalyzes the coordinated movement of the two tRNA molecules, the mRNA and conformational changes in the ribosome. This is Elongation factor G from Chlorobium phaeovibrioides (strain DSM 265 / 1930) (Prosthecochloris vibrioformis (strain DSM 265)).